The primary structure comprises 546 residues: MTTNYIFVTGGVVSSLGKGIAAASLAAILEARGLKVTMMKLDPYINVDPGTMSPTQHGEVFVTEDGAETDLDLGHYERFIRTKMTKRNNFTAGRVYADVLRKERRGDYLGATIQVIPHITNAIKDRVIAGSEGHDIAIVEVGGTVGDIESLPFMEAIRQLAVELGRERAMFMHLTLVPYLAAAGEVKTKPTQHSVKELLSIGIQPDILVCRSDRMIPANERKKIALFCNVPEKAVISMKDVDSIYKIPQLVKSQGLDDLVCTRFGIDAPEADLSEWEQVIYEEANPTGEVTIGMVGKYIELPDAYKSVNEALKHAGLKNRLNVTIKYVDSQDIETKGVELLEGLDAILVPGGFGDRGVEGKIRAAQYARENKVPYLGICLGMQVALIEYARNVAGMEGAHSTEFNKDTKYPVVGLITEWVDETGNVEERTESSDLGGTMRLGSQLCHLEKGTKARELYGSATIHERHRHRYEVNNVLRPQIEKAGLKVSGLSADKKLVEMIENPAHPWFVAAQFHPEFTSTPRDGHPLFAGFVKAAGQYSRGEFEK.

The amidoligase domain stretch occupies residues 1-266 (MTTNYIFVTG…DDLVCTRFGI (266 aa)). Serine 14 is a binding site for CTP. Serine 14 is a UTP binding site. ATP is bound by residues 15–20 (SLGKGI) and aspartate 72. Aspartate 72 and glutamate 140 together coordinate Mg(2+). Residues 147-149 (DIE), 187-192 (KTKPTQ), and lysine 223 each bind CTP. Residues 187–192 (KTKPTQ) and lysine 223 each bind UTP. An ATP-binding site is contributed by 239 to 241 (KDV). One can recognise a Glutamine amidotransferase type-1 domain in the interval 291 to 542 (TIGMVGKYIE…VKAAGQYSRG (252 aa)). Glycine 352 is a binding site for L-glutamine. The Nucleophile; for glutamine hydrolysis role is filled by cysteine 379. Residues 380-383 (LGMQ), glutamate 403, and arginine 470 contribute to the L-glutamine site. Catalysis depends on residues histidine 515 and glutamate 517.

This sequence belongs to the CTP synthase family. As to quaternary structure, homotetramer.

It carries out the reaction UTP + L-glutamine + ATP + H2O = CTP + L-glutamate + ADP + phosphate + 2 H(+). It catalyses the reaction L-glutamine + H2O = L-glutamate + NH4(+). The enzyme catalyses UTP + NH4(+) + ATP = CTP + ADP + phosphate + 2 H(+). It functions in the pathway pyrimidine metabolism; CTP biosynthesis via de novo pathway; CTP from UDP: step 2/2. Allosterically activated by GTP, when glutamine is the substrate; GTP has no effect on the reaction when ammonia is the substrate. The allosteric effector GTP functions by stabilizing the protein conformation that binds the tetrahedral intermediate(s) formed during glutamine hydrolysis. Inhibited by the product CTP, via allosteric rather than competitive inhibition. In terms of biological role, catalyzes the ATP-dependent amination of UTP to CTP with either L-glutamine or ammonia as the source of nitrogen. Regulates intracellular CTP levels through interactions with the four ribonucleotide triphosphates. The chain is CTP synthase from Vibrio parahaemolyticus serotype O3:K6 (strain RIMD 2210633).